Here is a 218-residue protein sequence, read N- to C-terminus: Small ribosomal subunit protein uS3c (218 aa).

The 76-residue stretch at 43–118 (IKNYVQKNMK…KLNISITRIE (76 aa)) folds into the KH type-2 domain.

It belongs to the universal ribosomal protein uS3 family. As to quaternary structure, part of the 30S ribosomal subunit.

It localises to the plastid. The protein localises to the chloroplast. The polypeptide is Small ribosomal subunit protein uS3c (rps3) (Populus alba (White poplar)).